The sequence spans 323 residues: MKDKYGREIDYLRISLTDKCNLRCAYCMEKDHNDFIHNDKLMTLDEILRVVKECASIGIKKVRLTGGEPLVREGIVDLIKNINKIPEIEEICLTTNGILLGDKVKELSENGLKRVNISLDTLKEDRFKEITRIGTLDKVLYSIEKCLENNVKVKINTVILEDFNKDEILDLINLAYKNPIDLRFIELMPIGEGKKFKGVTNSEILEIIKKEKKVLSDGKTLRLNGPAKYISIEGFKGKIGFISAMSDCFCEDCNRIRVTPEGFMKQCLHWKYGINLRDKMRNGISDEELREIIKKSIYEKPEKHNFKMKEKDEDKRFMYEIGG.

Residues 4–233 (KYGREIDYLR…NGPAKYISIE (230 aa)) enclose the Radical SAM core domain. Arg13 lines the GTP pocket. Positions 20 and 24 each coordinate [4Fe-4S] cluster. Tyr26 lines the S-adenosyl-L-methionine pocket. A [4Fe-4S] cluster-binding site is contributed by Cys27. Residue Arg63 coordinates GTP. Gly67 is a binding site for S-adenosyl-L-methionine. A GTP-binding site is contributed by Thr94. Ser118 contributes to the S-adenosyl-L-methionine binding site. Lys154 serves as a coordination point for GTP. Position 188 (Met188) interacts with S-adenosyl-L-methionine. [4Fe-4S] cluster-binding residues include Cys250 and Cys253. Residue 255–257 (RIR) coordinates GTP. Residue Cys267 participates in [4Fe-4S] cluster binding.

Belongs to the radical SAM superfamily. MoaA family. In terms of assembly, monomer and homodimer. The cofactor is [4Fe-4S] cluster.

The catalysed reaction is GTP + AH2 + S-adenosyl-L-methionine = (8S)-3',8-cyclo-7,8-dihydroguanosine 5'-triphosphate + 5'-deoxyadenosine + L-methionine + A + H(+). It participates in cofactor biosynthesis; molybdopterin biosynthesis. Catalyzes the cyclization of GTP to (8S)-3',8-cyclo-7,8-dihydroguanosine 5'-triphosphate. This is GTP 3',8-cyclase from Clostridium perfringens (strain SM101 / Type A).